A 165-amino-acid polypeptide reads, in one-letter code: Disulfide bond formation protein B (165 aa).

Topologically, residues 1 to 10 (MPAWLTNRTI) are cytoplasmic. Residues 11–27 (YFLCFLAIAGLMGFAFY) form a helical membrane-spanning segment. Over 28–45 (LQYVKDLEPCPLCMAQRI) the chain is Periplasmic. A disulfide bond links Cys-37 and Cys-40. Residues 46-62 (AFVLAGLVFLAAALHNP) traverse the membrane as a helical segment. Residues 63 to 68 (KNTGTT) lie on the Cytoplasmic side of the membrane. A helical transmembrane segment spans residues 69–86 (VYAFLGWVTTLGGAALAT). The Periplasmic portion of the chain corresponds to 87–143 (RQLWLQSLPADQVPACGPGLEYMLEAFPFSEVLTMMLTGTGECAEVQWTFLGLSIPG). Cysteines 102 and 129 form a disulfide. Residues 144–162 (WTLVAFIGFTAVWAFAWVR) traverse the membrane as a helical segment. Residues 163–165 (RPR) are Cytoplasmic-facing.

Belongs to the DsbB family.

The protein resides in the cell inner membrane. In terms of biological role, required for disulfide bond formation in some periplasmic proteins. Acts by oxidizing the DsbA protein. This Hahella chejuensis (strain KCTC 2396) protein is Disulfide bond formation protein B.